We begin with the raw amino-acid sequence, 509 residues long: Proto-oncogene tyrosine-protein kinase LCK (509 aa).

Residue glycine 2 is the site of N-myristoyl glycine attachment. Residues 2 to 72 (GCVCSSNPED…DNLVIALHSY (71 aa)) form an interactions with CD4 and CD8 region. 2 S-palmitoyl cysteine lipidation sites follow: cysteine 3 and cysteine 5. Positions 61 to 121 (LQDNLVIALH…PFNFVAKANS (61 aa)) constitute an SH3 domain. A Glycyl lysine isopeptide (Lys-Gly) (interchain with G-Cter in ubiquitin) cross-link involves residue lysine 99. Serine 102 carries the post-translational modification Phosphoserine. Residues 127–224 (WFFKNLSRKD…GLCTKLSRPC (98 aa)) form the SH2 domain. Positions 154 to 242 (RESESTAGSF…WWEDEWEVPR (89 aa)) are interaction with PTPRH. Residue threonine 159 is modified to Phosphothreonine. Position 162 is a phosphoserine (serine 162). At tyrosine 192 the chain carries Phosphotyrosine. Residue serine 194 is modified to Phosphoserine. Residues 245 to 498 (LKLVERLGAG…YLRSVLDDFF (254 aa)) form the Protein kinase domain. Residues 251-259 (LGAGQFGEV) and lysine 273 each bind ATP. Lysine 276 is covalently cross-linked (Glycyl lysine isopeptide (Lys-Gly) (interchain with G-Cter in ubiquitin)). Aspartate 364 (proton acceptor) is an active-site residue. Tyrosine 394 is subject to Phosphotyrosine; by autocatalysis. A Phosphotyrosine modification is found at tyrosine 505.

It belongs to the protein kinase superfamily. Tyr protein kinase family. SRC subfamily. As to quaternary structure, binds to the cytoplasmic domain of cell surface receptors, such as AXL, CD2, CD4, CD5, CD8, CD44, CD45 and CD122. Also binds to effector molecules, such as PI4K, VAV1, RASA1, FYB1 and to other protein kinases including CDK1, RAF1, ZAP70 and SYK. Binds to phosphatidylinositol 3'-kinase (PI3K) from T-lymphocytes through its SH3 domain and to the tyrosine phosphorylated form of KHDRBS1/p70 through its SH2 domain. Interacts with SQSTM1. Interacts with phosphorylated LIME1. Interacts with CBLB and PTPRH. Interacts with RUNX3. Forms a signaling complex with EPHA1, PTK2B and PI3-KINASE; upon activation by EFNA1 which may regulate T-lymphocytes migration. Associates with ZAP70 and RHOH; these interactions allow LCK-mediated RHOH and CD3 subunit phosphorylations in presence of a functional ZAP70. Interacts with CEACAM1 (via cytoplasmic domain); mediates CEACAM1 phosphorylation resulting in PTPN6 recruitment that dephosphorylates TCR stimulation-induced CD247 and ZAP70. Interacts with FYB2. Interacts with CD160. Interacts with CD48. Autophosphorylated on Tyr-394, increasing enzymatic activity, this site is dephosphorylated by PTN22. Phosphorylated on Tyr-505 by CSK, decreasing activity. Dephosphorylated by PTPRC/CD45. Dephosphorylation at Tyr-394 by PTPN2 negatively regulates T-cells differentiation. Dephosphorylation at Tyr-394 by DUSP22 negatively regulates T-cell receptor signaling. Post-translationally, myristoylation is required prior to palmitoylation. In terms of processing, palmitoylation regulates association with the plasma membrane and could be mediated by ZDHHC2. 'Lys-63'-linked ubiquitinated at Lys-99 and Lys-276 by UBR2; this modification is required for autophosphorylation at Tyr-394.

The protein resides in the cell membrane. It localises to the cytoplasm. It is found in the cytosol. It carries out the reaction L-tyrosyl-[protein] + ATP = O-phospho-L-tyrosyl-[protein] + ADP + H(+). Its activity is regulated as follows. The relative activities of the inhibitory tyrosine-protein kinase CSK and the activating tyrosine-protein phosphatase PTPRC/CD45 determine the level of LCK activity. These interactions allow rapid and efficient activation of LCK in response to TCR stimulation. Non-receptor tyrosine-protein kinase that plays an essential role in the selection and maturation of developing T-cells in the thymus and in the function of mature T-cells. Plays a key role in T-cell antigen receptor (TCR)-linked signal transduction pathways. Constitutively associated with the cytoplasmic portions of the CD4 and CD8 surface receptors. Association of the TCR with a peptide antigen-bound MHC complex facilitates the interaction of CD4 and CD8 with MHC class II and class I molecules, respectively, thereby recruiting the associated LCK protein to the vicinity of the TCR/CD3 complex. LCK then phosphorylates tyrosine residues within the immunoreceptor tyrosine-based activation motifs (ITAM) of the cytoplasmic tails of the TCR-gamma chains and CD3 subunits, initiating the TCR/CD3 signaling pathway. Once stimulated, the TCR recruits the tyrosine kinase ZAP70, that becomes phosphorylated and activated by LCK. Following this, a large number of signaling molecules are recruited, ultimately leading to lymphokine production. LCK also contributes to signaling by other receptor molecules. Associates directly with the cytoplasmic tail of CD2, which leads to hyperphosphorylation and activation of LCK. Also plays a role in the IL2 receptor-linked signaling pathway that controls the T-cell proliferative response. Binding of IL2 to its receptor results in increased activity of LCK. Is expressed at all stages of thymocyte development and is required for the regulation of maturation events that are governed by both pre-TCR and mature alpha beta TCR. Phosphorylates other substrates including RUNX3, PTK2B/PYK2, the microtubule-associated protein MAPT, RHOH or TYROBP. Interacts with UNC119; this interaction plays a crucial role in activation of LCK. In Rattus norvegicus (Rat), this protein is Proto-oncogene tyrosine-protein kinase LCK (Lck).